Here is a 145-residue protein sequence, read N- to C-terminus: D-aminoacyl-tRNA deacylase (145 aa).

The short motif at glycine 137 to proline 138 is the Gly-cisPro motif, important for rejection of L-amino acids element.

The protein belongs to the DTD family. As to quaternary structure, homodimer.

The protein localises to the cytoplasm. The catalysed reaction is glycyl-tRNA(Ala) + H2O = tRNA(Ala) + glycine + H(+). The enzyme catalyses a D-aminoacyl-tRNA + H2O = a tRNA + a D-alpha-amino acid + H(+). In terms of biological role, an aminoacyl-tRNA editing enzyme that deacylates mischarged D-aminoacyl-tRNAs. Also deacylates mischarged glycyl-tRNA(Ala), protecting cells against glycine mischarging by AlaRS. Acts via tRNA-based rather than protein-based catalysis; rejects L-amino acids rather than detecting D-amino acids in the active site. By recycling D-aminoacyl-tRNA to D-amino acids and free tRNA molecules, this enzyme counteracts the toxicity associated with the formation of D-aminoacyl-tRNA entities in vivo and helps enforce protein L-homochirality. This chain is D-aminoacyl-tRNA deacylase, found in Shewanella frigidimarina (strain NCIMB 400).